A 142-amino-acid chain; its full sequence is Probable signal recognition particle 19 kDa protein (142 aa).

Residues 115–142 form a disordered region; it reads KTRQPGYTAPSVASSSAAAAGKKNKKKK. Residues 123 to 135 show a composition bias toward low complexity; the sequence is APSVASSSAAAAG.

It belongs to the SRP19 family. As to quaternary structure, component of a signal recognition particle complex that consists of a 7SL RNA molecule of 300 nucleotides and six protein subunits: srpa-72, srpa-68, SRP54, F37F2.2/SRP19, F25G6.8/SRP14 and ZK512.4/SRP9.

The protein localises to the cytoplasm. It is found in the nucleus. It localises to the nucleolus. In terms of biological role, component of the signal recognition particle (SRP) complex, a ribonucleoprotein complex that mediates the cotranslational targeting of secretory and membrane proteins to the endoplasmic reticulum (ER). Binds directly to 7SL RNA. Mediates binding of SRP54 to the SRP complex. The chain is Probable signal recognition particle 19 kDa protein from Caenorhabditis elegans.